A 590-amino-acid polypeptide reads, in one-letter code: MSFIFNRETFEDNSFNEVLREKLMRALNLHDRTVGSSSGAMTTGTGAVECSGAAAAGQRPPRSKGGFSKVDILKSGIIVKKVEFPTIPKLEILDLDVSIQSKSLIKGICKVSCRDAMVQITTEIESNLLLLHVNSSPKFTTPKLISNDSFTVPITMTFDKLHLEAITNIFVKNTGVGISFNDVNLDFRLQCSIKLLQSSIEKRLKASMEEVFKDVLPSVIFNMSQRWFTHGETVVPTVDKSMVSSDTPVQPRMILDESDLSDLSPANMLRLSTLVSSRQTLCLNPTAVDTISTIPGCLERQNLHRFNLRFPSLYNYYSNKEQQGAHNNEKNRVEHLKLWGRSSSNPIPTRASFKVENTLPKEVLDSNSYDVRVITAIQTKMYERASNDVVLRRRKIKMRSRKPSKANKDAVSPAQNDSGTSSCSNVASELPHASLQANPQSDEIDPAPEGGPNAEDAYKEELEDSGLRAPQDFPALENVTPVLAQLPNQQRSRLGSPLSAGRPTPLLSPLDDSHWLLQKRDPQDLRTTLYSPIRNGRFYVMPQPQLDTKEASAFLLENGKRFGFVGLLNNHNLKWGNDPPPPYREVSITQ.

Residues 1 to 225 (MSFIFNRETF…LPSVIFNMSQ (225 aa)) enclose the SMP-LTD domain. Over residues 393 to 405 (RRKIKMRSRKPSK) the composition is skewed to basic residues. The tract at residues 393–456 (RRKIKMRSRK…APEGGPNAED (64 aa)) is disordered. Residues 413–427 (PAQNDSGTSSCSNVA) show a composition bias toward polar residues.

It belongs to the MDM34 family. As to quaternary structure, component of the ER-mitochondria encounter structure (ERMES) or MDM complex, composed of MMM1, MDM10, MDM12 and MDM34.

The protein resides in the mitochondrion outer membrane. Component of the ERMES/MDM complex, which serves as a molecular tether to connect the endoplasmic reticulum (ER) and mitochondria. Components of this complex are involved in the control of mitochondrial shape and protein biogenesis, and function in nonvesicular lipid trafficking between the ER and mitochondria. MDM34 is required for the interaction of the ER-resident membrane protein MMM1 and the outer mitochondrial membrane-resident beta-barrel protein MDM10. This is Mitochondrial distribution and morphology protein 34 from Eremothecium gossypii (strain ATCC 10895 / CBS 109.51 / FGSC 9923 / NRRL Y-1056) (Yeast).